The chain runs to 445 residues: Arginine biosynthesis bifunctional protein ArgJ, mitochondrial (445 aa).

The substrate site is built by Thr189, Lys215, Thr226, Glu312, Asn440, and Ser445. Thr226 (nucleophile) is an active-site residue.

Belongs to the ArgJ family. As to quaternary structure, heterodimer of an alpha and a beta chain. The alpha and beta chains are autoproteolytically processed from a single precursor protein within the mitochondrion.

It is found in the mitochondrion matrix. It catalyses the reaction N(2)-acetyl-L-ornithine + L-glutamate = N-acetyl-L-glutamate + L-ornithine. The catalysed reaction is L-glutamate + acetyl-CoA = N-acetyl-L-glutamate + CoA + H(+). It functions in the pathway amino-acid biosynthesis; L-arginine biosynthesis; L-ornithine and N-acetyl-L-glutamate from L-glutamate and N(2)-acetyl-L-ornithine (cyclic): step 1/1. Its pathway is amino-acid biosynthesis; L-arginine biosynthesis; N(2)-acetyl-L-ornithine from L-glutamate: step 1/4. In terms of biological role, catalyzes two activities which are involved in the cyclic version of arginine biosynthesis: the synthesis of acetylglutamate from glutamate and acetyl-CoA, and of ornithine by transacetylation between acetylornithine and glutamate. In Schizosaccharomyces pombe (strain 972 / ATCC 24843) (Fission yeast), this protein is Arginine biosynthesis bifunctional protein ArgJ, mitochondrial.